Reading from the N-terminus, the 346-residue chain is N-acetyl-gamma-glutamyl-phosphate reductase (346 aa).

C151 is a catalytic residue.

It belongs to the NAGSA dehydrogenase family. Type 1 subfamily.

It is found in the cytoplasm. It catalyses the reaction N-acetyl-L-glutamate 5-semialdehyde + phosphate + NADP(+) = N-acetyl-L-glutamyl 5-phosphate + NADPH + H(+). It functions in the pathway amino-acid biosynthesis; L-arginine biosynthesis; N(2)-acetyl-L-ornithine from L-glutamate: step 3/4. Functionally, catalyzes the NADPH-dependent reduction of N-acetyl-5-glutamyl phosphate to yield N-acetyl-L-glutamate 5-semialdehyde. The protein is N-acetyl-gamma-glutamyl-phosphate reductase of Ehrlichia canis (strain Jake).